A 123-amino-acid chain; its full sequence is Large ribosomal subunit protein uL29 (123 aa).

Residues 84–123 (RPKKTRAMRRRLNKHEEGLKTKKQQRKERLYPPRKYAVKA) form a disordered region. The segment covering 86 to 96 (KKTRAMRRRLN) has biased composition (basic residues).

This sequence belongs to the universal ribosomal protein uL29 family. As to quaternary structure, component of the large ribosomal subunit.

The protein localises to the cytoplasm. Component of the large ribosomal subunit. The ribosome is a large ribonucleoprotein complex responsible for the synthesis of proteins in the cell. The chain is Large ribosomal subunit protein uL29 (RPL35) from Ophiophagus hannah (King cobra).